Reading from the N-terminus, the 362-residue chain is Caveolae-associated protein 4 (362 aa).

A disordered region spans residues 1-24; sequence MEHNGSASNAGKIHQNRLSSVTED. Residues 100–120 are a coiled coil; the sequence is IKDVKARVEKQQVRVTKVETK. Phosphoserine occurs at positions 152, 171, and 172. 3 stretches are compositionally biased toward basic and acidic residues: residues 230–255, 275–289, and 305–320; these read RERL…ERFK, KAKD…VDRG, and HEFH…KEVT. Disordered regions lie at residues 230 to 289 and 305 to 346; these read RERL…VDRG and HEFH…KPQV. At tyrosine 324 the chain carries Phosphotyrosine. At threonine 334 the chain carries Phosphothreonine. Serine 353 bears the Phosphoserine mark.

This sequence belongs to the CAVIN family. As to quaternary structure, component of the CAVIN complex composed of CAVIN1, CAVIN2, CAVIN3 and CAVIN4. Interacts with CAVIN1. Interacts with CAVIN2; this augments the transactivation of NPPA. Interacts with CAV3, ADRA1A, ADRA1B, MAPK1 and MAPK3. Abundantly expressed in cardiac and skeletal muscle (at protein level). Weaker expression in aorta and lung. In heart, expressed in cardiomyocytes and vascular smooth muscle cells but not in other surrounding cells including vascular endothelial cells.

The protein localises to the cytoplasm. It localises to the myofibril. The protein resides in the sarcomere. It is found in the cytosol. Its subcellular location is the membrane. The protein localises to the caveola. It localises to the cell membrane. The protein resides in the sarcolemma. Functionally, modulates the morphology of formed caveolae in cardiomyocytes, but is not required for caveolar formation. Facilitates the recruitment of MAPK1/3 to caveolae within cardiomyocytes and regulates alpha-1 adrenergic receptor-induced hypertrophic responses in cardiomyocytes through MAPK1/3 activation. Contributes to proper membrane localization and stabilization of caveolin-3 (CAV3) in cardiomyocytes. Induces RHOA activation and activates NPPA transcription and myofibrillar organization through the Rho/ROCK signaling pathway. The protein is Caveolae-associated protein 4 (Cavin4) of Mus musculus (Mouse).